Consider the following 696-residue polypeptide: Glycosyltransferase GlyA (696 aa).

The interval M1–E301 is GT2 domain. Residues K302–H556 form a GT8 domain region. Residues A308–Y313 and D399–C400 each bind UDP. The Mn(2+) site is built by D399, D401, and H518. Position 518-524 (H518–K524) interacts with UDP.

This sequence in the N-terminal section; belongs to the glycosyltransferase 2 family. The protein in the central section; belongs to the glycosyltransferase 8 family.

It functions in the pathway protein modification; protein glycosylation. Its function is as follows. Involved in the polymorphic O-glycosylation of the serine-rich repeat protein PsrP. Catalyzes the fourth step in glycosylation of PsrP in this bacteria. Can transfer the sugar from UDP-galactose to the terminal sugar moiety of PsrP-GlcNAc-Glc-Gal or of PsrP-GlcNAc-Glc-Glc (using truncated substrates with the PsrP SSR1 domain). Has hydrolytic activity against UDP-galactose and to a lesser extent against UDP-glucose. This Streptococcus pneumoniae serotype 4 (strain ATCC BAA-334 / TIGR4) protein is Glycosyltransferase GlyA.